Here is a 209-residue protein sequence, read N- to C-terminus: Guanylate kinase (209 aa).

One can recognise a Guanylate kinase-like domain in the interval 8-186 (GVLYIVSAPS…ALQDLVAITR (179 aa)). An ATP-binding site is contributed by 15 to 22 (APSGAGKT).

It belongs to the guanylate kinase family.

It localises to the cytoplasm. The enzyme catalyses GMP + ATP = GDP + ADP. Functionally, essential for recycling GMP and indirectly, cGMP. This chain is Guanylate kinase, found in Thiobacillus denitrificans (strain ATCC 25259 / T1).